The chain runs to 314 residues: Mitochondrial RNA-splicing protein MRS3 (314 aa).

Solcar repeat units lie at residues 31-118 (APLY…CKKN), 128-210 (HHPF…STKF), and 217-310 (YNPL…AKHF). Transmembrane regions (helical) follow at residues 33 to 52 (LYHQ…SVMF), 93 to 112 (GVQS…FGTY), 130 to 149 (PFKT…ALMN), 185 to 204 (SYPT…FVIY), 219 to 238 (PLIH…AITT), and 285 to 298 (GWKP…PATA).

This sequence belongs to the mitochondrial carrier (TC 2.A.29) family.

The protein localises to the mitochondrion inner membrane. Functionally, MRS3 suppresses a mitochondrial splice defect in the first intron of the COB gene. It may act as a carrier, exerting its suppressor activity via modulation of solute concentrations in the mitochondrion (possibly of cations). The sequence is that of Mitochondrial RNA-splicing protein MRS3 (MRS3) from Saccharomyces cerevisiae (strain ATCC 204508 / S288c) (Baker's yeast).